A 486-amino-acid polypeptide reads, in one-letter code: MTLTIYNTLTRRQEPLETVEPGKVKMYCCGVTVYDYCHLGHARSYIVWDTIRRYLIWRGFGVKYIQNFTDIDDKILNRAKEQGLTMAEVSNRFIDAYFADIRRLNVLDADEYPRVTEHIPEIHQLIQILEEKGLAYAVGGDVYYRVERFPSYGKLSGRELEQMQAGASGRVDAEDSEPKKQHPFDFALWKAAKPGEPAWDSPWGAGRPGWHIECSAMIRSKLGATIDIHGGGGDLIFPHHENEIAQSEAAMNQPLARYWTHNGMVMVNGQKMSKSLGNFITIRELLDGVGSWKEDPVNPMAVRLFVLQAHYRKPLDFTEEAIATAENSWKTLKEGLLFGYQYGEKLGWGQESAIIPELATRFQELGDDDFNFSGGLAVLFELAKELRREGNILVHEGTTKTPSDELQRQWNTLVTLAKILGLEAKLDDETQTQAGLSDTDIEALIEQRQAARKNKNFSESDRIRNELQAQGVTLIDSPQGTRWHRS.

Residue C29 coordinates Zn(2+). Positions 31 to 41 (VTVYDYCHLGH) match the 'HIGH' region motif. Zn(2+) is bound by residues C214, H239, and E243. The 'KMSKS' region motif lies at 271–275 (KMSKS). K274 lines the ATP pocket.

Belongs to the class-I aminoacyl-tRNA synthetase family. As to quaternary structure, monomer. It depends on Zn(2+) as a cofactor.

The protein localises to the cytoplasm. The catalysed reaction is tRNA(Cys) + L-cysteine + ATP = L-cysteinyl-tRNA(Cys) + AMP + diphosphate. In Nostoc sp. (strain PCC 7120 / SAG 25.82 / UTEX 2576), this protein is Cysteine--tRNA ligase.